The chain runs to 54 residues: UPF0181 protein APJL_0874 (54 aa).

This sequence belongs to the UPF0181 family.

The protein is UPF0181 protein APJL_0874 of Actinobacillus pleuropneumoniae serotype 3 (strain JL03).